The primary structure comprises 145 residues: Ribonuclease P protein component (145 aa).

A disordered region spans residues 119-145 (PLPAAPGTMPPARTVRPSSPSPTEPEL).

It belongs to the RnpA family. In terms of assembly, consists of a catalytic RNA component (M1 or rnpB) and a protein subunit.

It catalyses the reaction Endonucleolytic cleavage of RNA, removing 5'-extranucleotides from tRNA precursor.. Its function is as follows. RNaseP catalyzes the removal of the 5'-leader sequence from pre-tRNA to produce the mature 5'-terminus. It can also cleave other RNA substrates such as 4.5S RNA. The protein component plays an auxiliary but essential role in vivo by binding to the 5'-leader sequence and broadening the substrate specificity of the ribozyme. The polypeptide is Ribonuclease P protein component (Xanthomonas euvesicatoria pv. vesicatoria (strain 85-10) (Xanthomonas campestris pv. vesicatoria)).